A 242-amino-acid chain; its full sequence is Transcription factor Spi-C (242 aa).

The segment at residues 112–195 (LRLFEYLFES…IRRKLTYQFS (84 aa)) is a DNA-binding region (ETS).

The protein belongs to the ETS family. In terms of assembly, binds DNA as a monomer. Expressed in lymphoid tissues, including spleen, bone marrow and thymus. According to PubMed:19037245, highly expressed in red pulp macrophages and, at lower, levels in B-cells, but not in other cells, including, monocytes, dendritic cells and other tissue macrophages. According to PubMed:10464163 expressed in pre- and mature B-cells but not in immature B-cells; according to PubMed:10187812 not expressed in pre- but predominantly in mature B-cells and at lower levels in macrophages.

It localises to the nucleus. Controls the development of red pulp macrophages required for red blood cells recycling and iron homeostasis. Transcription factor that binds to the PU-box, a purine-rich DNA sequence (5'-GAGGA[AT]-3') that can act as a lymphoid-specific enhancer. Regulates VCAM1 gene expression. The chain is Transcription factor Spi-C (Spic) from Mus musculus (Mouse).